A 104-amino-acid polypeptide reads, in one-letter code: UPF0213 protein in VLF1-GP41 intergenic region (104 aa).

The region spanning 9–89 is the GIY-YIG domain; the sequence is KVWCVYILRQ…SKYFKLRLIK (81 aa).

Belongs to the UPF0213 family.

This chain is UPF0213 protein in VLF1-GP41 intergenic region, found in Autographa californica nuclear polyhedrosis virus (AcMNPV).